Reading from the N-terminus, the 450-residue chain is Interferon-related developmental regulator 1 (450 aa).

Basic residues predominate over residues 1-10; it reads MPKNKKRNTP. The disordered stretch occupies residues 1-46; the sequence is MPKNKKRNTPHRGGSGGGGSGAAATTAATAGGQHRNVQPFSDEDAS. A compositionally biased stretch (low complexity) spans 22 to 32; the sequence is AAATTAATAGG.

The protein belongs to the IFRD family. In terms of assembly, interacts with PSIP1/LEDGF.

Functionally, could play a role in regulating gene activity in the proliferative and/or differentiative pathways induced by NGF. May be an autocrine factor that attenuates or amplifies the initial ligand-induced signal. The chain is Interferon-related developmental regulator 1 (IFRD1) from Sus scrofa (Pig).